Consider the following 669-residue polypeptide: L-type lectin-domain containing receptor kinase V.9 (669 aa).

Residues 1–21 (MKFFVLVLLLVLQFFSNKALS) form the signal peptide. The Extracellular segment spans residues 22–286 (QSEEGEFGFN…RDSRSTSVKK (265 aa)). The tract at residues 38-259 (SGIAITNSKG…SHYILGWTFK (222 aa)) is legume-lectin like. N-linked (GlcNAc...) asparagine glycans are attached at residues Asn-53, Asn-75, Asn-124, Asn-206, and Asn-261. A helical transmembrane segment spans residues 287–307 (ILAISLSLTSLAILVFLTISY). Residues 308–669 (MLFLKRKKLM…FTEPFVSHGR (362 aa)) lie on the Cytoplasmic side of the membrane. Residues 344–603 (FRNSELLGKG…LGLFCSHPVA (260 aa)) enclose the Protein kinase domain. ATP-binding positions include 350-358 (LGKGGFGKV) and Lys-373. Asp-469 serves as the catalytic Proton acceptor.

It in the C-terminal section; belongs to the protein kinase superfamily. Ser/Thr protein kinase family. This sequence in the N-terminal section; belongs to the leguminous lectin family.

The protein resides in the cell membrane. The catalysed reaction is L-seryl-[protein] + ATP = O-phospho-L-seryl-[protein] + ADP + H(+). It catalyses the reaction L-threonyl-[protein] + ATP = O-phospho-L-threonyl-[protein] + ADP + H(+). This is L-type lectin-domain containing receptor kinase V.9 (LECRK59) from Arabidopsis thaliana (Mouse-ear cress).